The sequence spans 558 residues: Zinc finger protein piragua (558 aa).

The 80-residue stretch at serine 15–glutamine 94 folds into the ZAD domain. Residues cysteine 17, cysteine 20, cysteine 67, and cysteine 70 each coordinate Zn(2+). The segment covering leucine 132–aspartate 177 has biased composition (acidic residues). The disordered stretch occupies residues leucine 132–methionine 178. 9 C2H2-type zinc fingers span residues phenylalanine 208–histidine 231, tyrosine 237–histidine 260, tyrosine 266–histidine 288, phenylalanine 294–histidine 316, phenylalanine 322–histidine 344, phenylalanine 350–histidine 372, tyrosine 414–histidine 436, phenylalanine 441–histidine 464, and phenylalanine 468–histidine 490.

Its function is as follows. May be involved in transcriptional regulation. The function of this protein is unclear. According to one report, it is required for development and viability since mutants display defects in several developmental morphogenetic processes including dorsal closure and head involution, and die by the first instar larval stage. It may also be involved in fwe-mediated cellular competition. However, according to another report, it is not required for development or viability since mutants have no visible phenotype and are fertile. This chain is Zinc finger protein piragua, found in Drosophila melanogaster (Fruit fly).